The chain runs to 229 residues: Leucyl/phenylalanyl-tRNA--protein transferase (229 aa).

This sequence belongs to the L/F-transferase family.

It localises to the cytoplasm. It carries out the reaction N-terminal L-lysyl-[protein] + L-leucyl-tRNA(Leu) = N-terminal L-leucyl-L-lysyl-[protein] + tRNA(Leu) + H(+). The catalysed reaction is N-terminal L-arginyl-[protein] + L-leucyl-tRNA(Leu) = N-terminal L-leucyl-L-arginyl-[protein] + tRNA(Leu) + H(+). The enzyme catalyses L-phenylalanyl-tRNA(Phe) + an N-terminal L-alpha-aminoacyl-[protein] = an N-terminal L-phenylalanyl-L-alpha-aminoacyl-[protein] + tRNA(Phe). Functionally, functions in the N-end rule pathway of protein degradation where it conjugates Leu, Phe and, less efficiently, Met from aminoacyl-tRNAs to the N-termini of proteins containing an N-terminal arginine or lysine. The sequence is that of Leucyl/phenylalanyl-tRNA--protein transferase from Pseudomonas syringae pv. syringae (strain B728a).